The chain runs to 180 residues: Probable phospholipid hydroperoxide glutathione peroxidase (180 aa).

Cys-54 is an active-site residue.

This sequence belongs to the glutathione peroxidase family.

It localises to the cytoplasm. It carries out the reaction a hydroperoxy polyunsaturated fatty acid + 2 glutathione = a hydroxy polyunsaturated fatty acid + glutathione disulfide + H2O. Protects cells and enzymes from oxidative damage, by catalyzing the reduction of hydrogen peroxide, lipid peroxides and organic hydroperoxide, by glutathione. This is Probable phospholipid hydroperoxide glutathione peroxidase (GPXHA-2) from Helianthus annuus (Common sunflower).